A 913-amino-acid polypeptide reads, in one-letter code: Calcium-activated chloride channel regulator 1 (913 aa).

The first 21 residues, 1 to 21, serve as a signal peptide directing secretion; that stretch reads MGSFKSSVFILVLHLLEGALS. A metalloprotease domain region spans residues 46–199; the sequence is DETLIQQIKD…DIAGKNVVNH (154 aa). Residue His156 participates in Zn(2+) binding. Glu157 is an active-site residue. Zn(2+) is bound by residues His160 and Asn167. The VWFA domain occupies 306–475; sequence IVCLVLDKSG…NGLIDAFGAL (170 aa). 7 N-linked (GlcNAc...) asparagine glycosylation sites follow: Asn503, Asn514, Asn770, Asn804, Asn810, Asn836, and Asn885.

The protein belongs to the CLCR family. Glycosylated. In terms of processing, the translation product is autoproteolytically cleaved by the metalloprotease domain in the endoplasmic reticulum into a N-terminal and a C-terminal products that remain physically associated with each other. The cleavage is necessary for calcium-activated chloride channel (CaCC) activation activity. In terms of tissue distribution, expressed in mucin-producing cells in the respiratory and intestinal tracts, cutaneous sweat glands, and renal mucous glands (at protein level). Strong overexpression in the airways of horses with recurrent airway obstruction (at protein level).

The protein localises to the secreted. Its subcellular location is the extracellular space. Functionally, may be involved in mediating calcium-activated chloride conductance. May play critical roles in goblet cell metaplasia, mucus hypersecretion, cystic fibrosis and AHR. May be involved in the regulation of mucus production and/or secretion by goblet cells. Involved in the regulation of tissue inflammation in the innate immune response. May play a role as a tumor suppressor. Induces MUC5AC. The protein is Calcium-activated chloride channel regulator 1 (CLCA1) of Equus caballus (Horse).